The primary structure comprises 434 residues: Probable carboxypeptidase BDCG_03757 (434 aa).

The signal sequence occupies residues 1–20; that stretch reads MKLSHLAAALSAQLVAPVAA. 2 N-linked (GlcNAc...) asparagine glycosylation sites follow: Asn136 and Asn150. Residue Asp160 coordinates Zn(2+). Residue Glu192 is the Proton acceptor of the active site. Residue Glu193 participates in Zn(2+) binding. Asn343 carries an N-linked (GlcNAc...) asparagine glycan.

This sequence belongs to the peptidase M20A family. Zn(2+) is required as a cofactor.

It is found in the secreted. The protein is Probable carboxypeptidase BDCG_03757 of Ajellomyces dermatitidis (strain ER-3 / ATCC MYA-2586) (Blastomyces dermatitidis).